Reading from the N-terminus, the 116-residue chain is Large ribosomal subunit protein bL17 (116 aa).

The protein belongs to the bacterial ribosomal protein bL17 family. In terms of assembly, part of the 50S ribosomal subunit. Contacts protein L32.

The protein is Large ribosomal subunit protein bL17 of Fusobacterium nucleatum subsp. nucleatum (strain ATCC 25586 / DSM 15643 / BCRC 10681 / CIP 101130 / JCM 8532 / KCTC 2640 / LMG 13131 / VPI 4355).